The following is a 270-amino-acid chain: Formamidopyrimidine-DNA glycosylase (270 aa).

Pro-2 serves as the catalytic Schiff-base intermediate with DNA. Residue Glu-3 is the Proton donor of the active site. Lys-58 serves as the catalytic Proton donor; for beta-elimination activity. 3 residues coordinate DNA: His-91, Arg-110, and Arg-151. Residues 236-270 (FVYGRGGQPCKVCGTALREVKLGQRASVYCPRCQR) form an FPG-type zinc finger. The active-site Proton donor; for delta-elimination activity is Arg-260.

The protein belongs to the FPG family. As to quaternary structure, monomer. It depends on Zn(2+) as a cofactor.

It carries out the reaction Hydrolysis of DNA containing ring-opened 7-methylguanine residues, releasing 2,6-diamino-4-hydroxy-5-(N-methyl)formamidopyrimidine.. It catalyses the reaction 2'-deoxyribonucleotide-(2'-deoxyribose 5'-phosphate)-2'-deoxyribonucleotide-DNA = a 3'-end 2'-deoxyribonucleotide-(2,3-dehydro-2,3-deoxyribose 5'-phosphate)-DNA + a 5'-end 5'-phospho-2'-deoxyribonucleoside-DNA + H(+). Involved in base excision repair of DNA damaged by oxidation or by mutagenic agents. Acts as a DNA glycosylase that recognizes and removes damaged bases. Has a preference for oxidized purines, such as 7,8-dihydro-8-oxoguanine (8-oxoG). Has AP (apurinic/apyrimidinic) lyase activity and introduces nicks in the DNA strand. Cleaves the DNA backbone by beta-delta elimination to generate a single-strand break at the site of the removed base with both 3'- and 5'-phosphates. The polypeptide is Formamidopyrimidine-DNA glycosylase (Pseudomonas putida (strain GB-1)).